The primary structure comprises 208 residues: Uracil phosphoribosyltransferase (208 aa).

Residues Arg-78, Arg-103, and 130-138 (DPMLATGGS) each bind 5-phospho-alpha-D-ribose 1-diphosphate. Residues Ile-193 and 198-200 (GDA) each bind uracil. Asp-199 lines the 5-phospho-alpha-D-ribose 1-diphosphate pocket.

The protein belongs to the UPRTase family. The cofactor is Mg(2+).

The enzyme catalyses UMP + diphosphate = 5-phospho-alpha-D-ribose 1-diphosphate + uracil. It functions in the pathway pyrimidine metabolism; UMP biosynthesis via salvage pathway; UMP from uracil: step 1/1. Its activity is regulated as follows. Allosterically activated by GTP. Functionally, catalyzes the conversion of uracil and 5-phospho-alpha-D-ribose 1-diphosphate (PRPP) to UMP and diphosphate. This Yersinia enterocolitica serotype O:8 / biotype 1B (strain NCTC 13174 / 8081) protein is Uracil phosphoribosyltransferase.